The sequence spans 56 residues: MTSTTLVKCACEPCLCNVDPSKAIDRNGLYYCSEACADGHTGGSKGCGHTGCNCHG.

The Zn(2+) site is built by Cys9, Cys11, Cys14, Cys16, Cys32, Cys36, His40, Cys47, His49, Cys52, and Cys54.

Belongs to the metallothionein superfamily. Type 14 family.

Its function is as follows. May play a role in essential metal ion homeostasis (especially zinc homeostasis) and resistance to certain non-essential metal ions. Binds four zinc ions. The polypeptide is Metallothionein (smtA) (Synechococcus elongatus (strain ATCC 33912 / PCC 7942 / FACHB-805) (Anacystis nidulans R2)).